Reading from the N-terminus, the 427-residue chain is Gamma-glutamyl phosphate reductase (427 aa).

The protein belongs to the gamma-glutamyl phosphate reductase family.

The protein localises to the cytoplasm. It carries out the reaction L-glutamate 5-semialdehyde + phosphate + NADP(+) = L-glutamyl 5-phosphate + NADPH + H(+). The protein operates within amino-acid biosynthesis; L-proline biosynthesis; L-glutamate 5-semialdehyde from L-glutamate: step 2/2. Its function is as follows. Catalyzes the NADPH-dependent reduction of L-glutamate 5-phosphate into L-glutamate 5-semialdehyde and phosphate. The product spontaneously undergoes cyclization to form 1-pyrroline-5-carboxylate. The chain is Gamma-glutamyl phosphate reductase from Bifidobacterium adolescentis (strain ATCC 15703 / DSM 20083 / NCTC 11814 / E194a).